Consider the following 266-residue polypeptide: Tryptophan synthase alpha chain (266 aa).

Residues Glu47 and Asp58 each act as proton acceptor in the active site.

Belongs to the TrpA family. In terms of assembly, tetramer of two alpha and two beta chains.

It localises to the plastid. It is found in the chloroplast. It catalyses the reaction (1S,2R)-1-C-(indol-3-yl)glycerol 3-phosphate + L-serine = D-glyceraldehyde 3-phosphate + L-tryptophan + H2O. Its pathway is amino-acid biosynthesis; L-tryptophan biosynthesis; L-tryptophan from chorismate: step 5/5. In terms of biological role, the alpha subunit is responsible for the aldol cleavage of indoleglycerol phosphate to indole and glyceraldehyde 3-phosphate. In Cyanidium caldarium (Red alga), this protein is Tryptophan synthase alpha chain.